We begin with the raw amino-acid sequence, 268 residues long: Stomatin homolog PYRAB06580 (268 aa).

Residues 1–21 traverse the membrane as a helical segment; it reads MILPTNFFVTTIILLFILIFL. Coiled-coil stretches lie at residues 125-152 and 178-213; these read GQAH…EATD and KQAE…ISEH.

It belongs to the band 7/mec-2 family. As to quaternary structure, homotrimer.

Its subcellular location is the membrane. In Pyrococcus abyssi (strain GE5 / Orsay), this protein is Stomatin homolog PYRAB06580.